Reading from the N-terminus, the 318-residue chain is Glycine--tRNA ligase alpha subunit (318 aa).

Belongs to the class-II aminoacyl-tRNA synthetase family. Tetramer of two alpha and two beta subunits.

It localises to the cytoplasm. The enzyme catalyses tRNA(Gly) + glycine + ATP = glycyl-tRNA(Gly) + AMP + diphosphate. This Methylibium petroleiphilum (strain ATCC BAA-1232 / LMG 22953 / PM1) protein is Glycine--tRNA ligase alpha subunit.